The chain runs to 193 residues: Pyridoxal 5'-phosphate synthase subunit PdxT (193 aa).

50-52 (GES) contributes to the L-glutamine binding site. The Nucleophile role is filled by Cys82. L-glutamine contacts are provided by residues Arg109 and 136-137 (IR). Active-site charge relay system residues include His172 and Glu174.

The protein belongs to the glutaminase PdxT/SNO family. In terms of assembly, in the presence of PdxS, forms a dodecamer of heterodimers. Only shows activity in the heterodimer.

The catalysed reaction is aldehydo-D-ribose 5-phosphate + D-glyceraldehyde 3-phosphate + L-glutamine = pyridoxal 5'-phosphate + L-glutamate + phosphate + 3 H2O + H(+). The enzyme catalyses L-glutamine + H2O = L-glutamate + NH4(+). Its pathway is cofactor biosynthesis; pyridoxal 5'-phosphate biosynthesis. Functionally, catalyzes the hydrolysis of glutamine to glutamate and ammonia as part of the biosynthesis of pyridoxal 5'-phosphate. The resulting ammonia molecule is channeled to the active site of PdxS. In Streptococcus pneumoniae serotype 19F (strain G54), this protein is Pyridoxal 5'-phosphate synthase subunit PdxT.